The following is a 403-amino-acid chain: Peroxisomal membrane protein PEX13 (403 aa).

Pro residues predominate over residues 1 to 11; sequence MASQPPPPPKP. Residues 1–68 are disordered; the sequence is MASQPPPPPK…PSQQTGSSSV (68 aa). The Peroxisomal matrix portion of the chain corresponds to 1–134; that stretch reads MASQPPPPPK…SSRGAFQSIE (134 aa). Over residues 59-68 the composition is skewed to polar residues; sequence PSQQTGSSSV. The helical transmembrane segment at 135-155 threads the bilayer; sequence SIVHAFASVSMMMDATFSAVY. The interval 145-233 is targeting to peroxisomes; sequence MMMDATFSAV…EDRAATSAKS (89 aa). Residues 156–174 lie on the Cytoplasmic side of the membrane; it reads NSFRAVLDVANHFSRLKIH. Residues 175–192 form a helical membrane-spanning segment; sequence FTKVFSAFALVRTIRYLY. Residues 175–196 form an interaction with PEX19 region; it reads FTKVFSAFALVRTIRYLYRRLQ. At 193–233 the chain is on the peroxisomal matrix side; it reads RRLQRMLGLRRGSENEDLWAESEGTVACLGAEDRAATSAKS. Residues 234 to 254 traverse the membrane as a helical segment; it reads WPIFLFFAVILGGPYLIWKLL. Residues 255-403 are Cytoplasmic-facing; that stretch reads STHSDEVTDS…IGKDGEKQDL (149 aa). The region spanning 272-336 is the SH3 domain; the sequence is DDHVVARAEY…PANYVKILGK (65 aa). Phosphoserine is present on serine 354.

It belongs to the peroxin-13 family. In terms of assembly, interacts (via SH3 domain) with PEX14 (via SH3-binding motif); forming the PEX13-PEX14 docking complex. Interacts with PEX19.

The protein localises to the peroxisome membrane. Functionally, component of the PEX13-PEX14 docking complex, a translocon channel that specifically mediates the import of peroxisomal cargo proteins bound to PEX5 receptor. The PEX13-PEX14 docking complex forms a large import pore which can be opened to a diameter of about 9 nm. Mechanistically, PEX5 receptor along with cargo proteins associates with the PEX14 subunit of the PEX13-PEX14 docking complex in the cytosol, leading to the insertion of the receptor into the organelle membrane with the concomitant translocation of the cargo into the peroxisome matrix. Involved in the import of PTS1- and PTS2-type containing proteins. This is Peroxisomal membrane protein PEX13 from Homo sapiens (Human).